Reading from the N-terminus, the 160-residue chain is Cytochrome b6-f complex subunit 4 (160 aa).

Transmembrane regions (helical) follow at residues 36 to 56 (LLYI…GLAV), 95 to 115 (LLGI…PFIE), and 128 to 148 (IAMA…IGAC).

This sequence belongs to the cytochrome b family. PetD subfamily. In terms of assembly, the 4 large subunits of the cytochrome b6-f complex are cytochrome b6, subunit IV (17 kDa polypeptide, PetD), cytochrome f and the Rieske protein, while the 4 small subunits are PetG, PetL, PetM and PetN. The complex functions as a dimer.

It localises to the cellular thylakoid membrane. Its function is as follows. Component of the cytochrome b6-f complex, which mediates electron transfer between photosystem II (PSII) and photosystem I (PSI), cyclic electron flow around PSI, and state transitions. The chain is Cytochrome b6-f complex subunit 4 from Prochlorococcus marinus (strain MIT 9313).